The chain runs to 362 residues: Probable dual-specificity RNA methyltransferase RlmN (362 aa).

E91 acts as the Proton acceptor in catalysis. The Radical SAM core domain maps to 97–329 (QHYGLSVCVT…KKNGVNCVVR (233 aa)). Residues C104 and C340 are joined by a disulfide bond. The [4Fe-4S] cluster site is built by C111, C115, and C118. S-adenosyl-L-methionine is bound by residues 163–164 (GE), S195, 218–220 (SLH), and N296. C340 (S-methylcysteine intermediate) is an active-site residue.

It belongs to the radical SAM superfamily. RlmN family. [4Fe-4S] cluster is required as a cofactor.

It is found in the cytoplasm. The enzyme catalyses adenosine(2503) in 23S rRNA + 2 reduced [2Fe-2S]-[ferredoxin] + 2 S-adenosyl-L-methionine = 2-methyladenosine(2503) in 23S rRNA + 5'-deoxyadenosine + L-methionine + 2 oxidized [2Fe-2S]-[ferredoxin] + S-adenosyl-L-homocysteine. The catalysed reaction is adenosine(37) in tRNA + 2 reduced [2Fe-2S]-[ferredoxin] + 2 S-adenosyl-L-methionine = 2-methyladenosine(37) in tRNA + 5'-deoxyadenosine + L-methionine + 2 oxidized [2Fe-2S]-[ferredoxin] + S-adenosyl-L-homocysteine. Functionally, specifically methylates position 2 of adenine 2503 in 23S rRNA and position 2 of adenine 37 in tRNAs. This Streptococcus sanguinis (strain SK36) protein is Probable dual-specificity RNA methyltransferase RlmN.